The primary structure comprises 368 residues: snRNA-activating protein complex subunit 1 (368 aa).

Residues 1-168 (MGTPPGLQTD…EEFKDPSDRV (168 aa)) form an SNAPC3-binding region. The tract at residues 164–268 (PSDRVMKLIT…AESLAKIKSK (105 aa)) is SNAPC4-binding. Disordered stretches follow at residues 224–257 (QQWHKDRKNPSLKSKTNDGEEKMEGNSQETERCE) and 275–368 (QASK…RRKH). Basic and acidic residues predominate over residues 238-257 (KTNDGEEKMEGNSQETERCE). Ser289 and Ser290 each carry phosphoserine.

In terms of assembly, part of the SNAPc complex composed of 5 subunits: SNAPC1, SNAPC2, SNAPC3, SNAPC4 and SNAPC5. SNAPC1 interacts with SNAPC3, SNAPC4 and TBP.

Its subcellular location is the nucleus. Part of the SNAPc complex required for the transcription of both RNA polymerase II and III small-nuclear RNA genes. Binds to the proximal sequence element (PSE), a non-TATA-box basal promoter element common to these 2 types of genes. Recruits TBP and BRF2 to the U6 snRNA TATA box. The chain is snRNA-activating protein complex subunit 1 (SNAPC1) from Homo sapiens (Human).